An 89-amino-acid chain; its full sequence is Small ribosomal subunit protein uS17 (89 aa).

The protein belongs to the universal ribosomal protein uS17 family. Part of the 30S ribosomal subunit.

Its function is as follows. One of the primary rRNA binding proteins, it binds specifically to the 5'-end of 16S ribosomal RNA. The chain is Small ribosomal subunit protein uS17 from Bacteroides fragilis (strain ATCC 25285 / DSM 2151 / CCUG 4856 / JCM 11019 / LMG 10263 / NCTC 9343 / Onslow / VPI 2553 / EN-2).